Reading from the N-terminus, the 4885-residue chain is MSSSASSRSVESSPARSSAASSSSSSEQHVAGGRLSSSQVNSTSVSSQSSSSRRARDDWCQSSHSSSSGSASSDSSSFCRGSRDSSSASVSRGTWRVDRDSFSVSGTSRSRLLSFPGSSHQPNRTENASHPDDLSSFRDSCVRRDTDTAERVATVRVNFPSRQNNDSSSGTCTSPISSSCDYSATESHSSASPSLRPSSGVVSSSRSSSRPGAALPLSVSSSSLLSQKKGRRKEAESLVDSSSTHSKQRDSAACRLLRVSPSASETTSVCRMSSGSGTARVARLEHQVEASFNPEEYPECFVCHPSLVAPSRLRETGKAQRDQRGLYTRFGRLHLSPQRLSVEATCVYGHCSSPPLSHLGAGAENSEGTNDLALSNEDKKGETQNARKRSASAFSESVSFREDTRRGSLLSVSLPAASSVLGSDLLSPSLREVYRHRGDSYLSRFKGGSSLLPAPRRSSCCVSSVPPFPESEKRNAGSDRRPTRSASLSSLLPNQPPASSSRRPSCSFSLLPAPLFSFGRRDPGGFDTDDACLRHDKESGVCTPAGTDLFVDVSREIRIIDALSEIQKESLIAAHCLDHSAALSEASAPLDASPSSSTVPHVSPSSVSSSLGRLHSSEKQTDCLRLRGSRGLQRRQRHTCSVAPSSADPLAPSFLQPHPSSKQLNQLLDHWRSGRVSVPRGSRVETRGEASCHAFDASPSCPPCSSQSLGSAAPNNACSRAAYGARLEAQANVLSNLDSRQGGRKEEEAADGGEDGEEGSRRLSQQTRPEGVEDRRGWTAIEEFNDCDGNVPRRSQLADFLRTCHVSRSQVGSVLGTHAKESSQDGEGEDQTGEDKGDAGDRCVTHEDDGGILCRSLESRKSEAKGYAMRKGSQKERVEKERMEGSPAKRRGPFPGGGETWTLPAYEADGLSSPRGREVVASCSSAGRLETSSKDASLSCSAFAGSENERLRAWALQAPSAEAFDRVDLVVRRLGLPQKTLQEKQTRPGDPGRSLLDEKPTVSEEKTKDRGGVAVPALASAAVKPFGNNEGGDGSAWSRLTNDLEAFRWKQMMQPSSTFLSAPVAKRGRALSPQGGADSEGRGESEEGRRGGCAAARRRAGAEEETRELLEAYEAARVKILAKSDEEAMQAAVSNSLHQSERVLGKLENVTRRLLEATCQSPKTKPISCSSSSAPSSSSSSSFSSSSSSSDCFSGDGASEATTVAPNGSAALSPPDGEKQRPSVGQRDALQAKLWESERELNSKDAEIGRTLQAVADSQAELARCRQELQESRSKALEAAKKAAVAQRMVRLLHQRRQEDRERWRQAVEECYRSRRSDQEADEDKQETDSASKKTDGNRNTESSLSRTSSCSSCSSSCSSFSSGSSSCSSSCSSCSSSCSSSCSSCSSSCSSSCSSSSSCSASCCGSTLLASASRPSSLSSAWFPAEDELPEVEELVAEYEAETRGYESRIAELQTLLEARNSAVEQLEVKGEALRNEVAFLQSMTEELRRARDAEEDCVLGALRQQVEEAEQSTLRLGREKDQLRSELDRVRASFTKQLAALETLNCRLRKEKEIFAEREKSQRRLHQEEHERMTRELHALRSEKEAGEAELLVLATAKAAAEMKCQQLEQQQETLKIHQERLCGNLLHLKNKAHGLSLSRRNHVSRQDSTNQAPSAECVDASSRRRVTSSVSEDDPSSALWSSSAERTDTSGNLFSSLSGPRSRSSGSPGESFERSHSSSCLASSPSCPSAASGSKEETSGSLQRMRSSASGSSKSVSVSSVNVLTYSEGPPLQSRSEFASSRPSFPSPSSASLSSESHRACGAPQAKEAANFFERLSSRLQSMREESERRQHALPGLPPHARSLEATQRQGRDSELGSFGEGPQGRAHSRQSGGDSAPSSFPAVPSQSGSSSASRGTEAFLGLAGDLERKDENASRFLSDSLGAQGQAQTDRGPMGFTARDEAGHLQGLPSGENDESITSSAFFARARQMKNSGKAVHSPDPRKDSGSESSDSQDPSAEEEEGDERAEEEEGDERAEDEEEDEREEEEEEEDEREEEEEEEDEREEEEEEGDERAEDEEEDEREEEEEEDERVEEEEEEDEREEEESVRGEGESGSGSISSSRRSRRSTPERGTRISSFSPRNGAGRKTSRSSFSGESRTSSEGSRRSGTSRSRDYASSPTSSRRDGETSPPGKSGHRRKRSNSASSEDSSRSAPQSDVSVNQVYAHPAALGSKTSGVRTPQASASRGAPASTAGATGGRPVSGSHPSRATERRDDGRQAKSVKKKEPQTRVRSRPRPESQESKTPESADSGATLDRGARHRETPRRNSESEEARPGEGERTCVSPASGGEKRRNFVSRDETSMGASRADHQETMKNAKLSTISRKRTPSPVAIYRVSPSSSSNASASQRESRAAKSSNTGMSSSSSFSLYRPHDFSREGSQGGPPPDFKFSEASSSSSSSISSSHSSSVPFPFSALASGSSSSAPAKTEKKVECEGAASSLSSLGASSSCHERVDPELRQQRGNTAEAQQKSDPSTVSPRKHSDEQRTEREGKTRRPEDSGCATQHRNPETRGRPPQPSLVAIQEGHPTSPFSVLPQHPPAARQLQPLSPSLRLSPSSVRCKQCAGVSSRFPHAHDLRVEPCCHRRCEGRNCSSGEESGEREQAVRCRHNPIPGRGPPVTENTVCHAPSDQGRTLAGGPRLAGSRHKEPENLSSASSCPSSSCPRAARQREGEGEKRHRETPSVKREENRKSSRTGEASSSVSIPNERSSDDVSPSGLERLSFGCTYTRYGREGREEKSPLLAPGHAANQRLTDGRSLHSFPDERKPSDMERRVASHMLPEKRTEEASPAAASGPGQRRLCGEACRPETGDKCGERQPVSSFSREKGTSSVQARRDESDEPRFVEKLRIGEQNPSLVLREMEDLRVTSRTAAEIDACMRHARLACRRAEPVSACPPSPFSFRGSVGDQLSPCESPHGPSHGASVSCVSAPTAIPPACCWLPEETAARGHRGNCVHANWQALADEELLEEEDGDTRRGEGEEREAREFGDRGERDDGHRAARGEVGCGVLGGRRERREETGRRRDTTRIPESCGGGEESFSPSSPYIQEERRQREAAQAVEAVARDADRNAYSHEHVQSLKEKLLRTIQTNEILRKRSRELSKKNRELRQHLLGDPAALPLPSFPSSSLLSSLSLAHSDRCRDMPQRLPSPPREDLKSSDSGVSSGALAGESDRRYSCPRETSSPSCGGRGGRRHPVFCRELSRNGNSRLDAQSGPQCRDFSPQLWRGERGNAGEMRPRESRESFGSCREVDDDSPQRWTRDGDREERRRARLPPSSSSPRHAGQAVDQRRLNYPQSFGASELRLCSSTPSFDEGGFPCSSTPSFDDEAILPCGREELQDSVGDNRGHLWGKRGRGREDPSWEATARTSGASPAYEEGWFRQEAFEEREEERRRQQFSPGCSPRSPTFLPCGGGTLRDAVEAPQPSKAACDGGYAGTVWSLPCVPDKAEVDNERREWKQATCEREPAEGDKTKCDKDAEGSERNCEGEREEKRRVKGLSEEVASVEGDFWAPASIIPSPLPSPAFAATGEKRLGDTVAPGVSSQAAFSLSCLSSARCASNPLPLTLDEAAGKVAAVESRSPPSVSPPPSTVSLLSSPEKARQGSDEGEETREAEQKREPREAIFPSPSLFSPAASFSSDASSSPCLAALRAVSPPGSRAKRLGEGAPEQVFLKEGETVNAGRHVLPQSLDAETGGFSNSAPVRERPRSLDLGKRNLHLAHEEDALAIHDQTSRTGSENEDSRDAAEDEAGVYAMPKAFEACGRAADGNGSSQTSCASLPKARDGESQEARPSLIVSTCEESPFCLCRKPPASLFEDPGSQKEAEKPLGKGEDGGVERGGEADRGAELELEEESSRVRQEAGEKANRDCNAKLRREQRGEGEIREETHEEKRTKAEAAEEETGGERREEETLKGDQEFRCERRDQSTGEQAAEERKTTGTKARCLADVLSRNINPLFPAEAVPGEEEDQDAGIFAEETNAAGCAKSERNEVDDAQFGSPRETGDSQTVCFSPHSALRCLSIKRLSLPLPSRSCKTFAEKLLSPSHVRSSLSSALAGSDSSSPGALGVSENVNAESRSPSYASTCWSSFLEDGERTEEARGCSRPSQPGVCTPSFQPSSLPPSFFTELPTTHMIQTARTNFPSTPLSFRSSSSSSPILGDLSRKSSSSRCSCGSSSPSPARGTAPRRPPVSSLRLSLPRAVASAQPSFCCNSSRSSSSLSSFSLSSSRPFLSARPPWGSTLGLKSKTRVGRQPRGYPAYLFHLHEAGKTICRRCDACPFRLLQREQEELRRLQALLLARKNRERSETREDVKPVQRESPSFLLKHSEERKDVLPGRTENDGQGPSLTSTRLRLGLLCQPMATALRQNEFRRENMDLCPRSPSPRGASSSVSPASSASPASSASPASSASRTSRTSRASRTSSPRSSVSHVSSARQGEAVRDVTESSDLRRLRPFESLRTLEKLRPLETRSVSSRALPLTPRVQTKSLTSRSASMAPVSSRAVSTSRGPRASLNSLSSMWTSQLVSAHHMKSRRLPDVDSCLARFPWFSAEDARLLACLLQQRRRELWEEIFNYERDLALAAAAPSQKRAAAPEDRREDGDTHRPGSLTETTEREGKEQERKAETDREEQERKTETDREEQERKTETDREEQKRKTETDREEHERKTETDREEQGRKAETDREEQERKTETDREEQERKAETERLQDWRETRKSEKTAKGSEQKSSRQRKLKTDAKDPRAGREEDTEKGKEGRKENARCRLVMRESGNLYGGSSCADLLLSPPGEDGGSSGCDRNGGESHESREEKKSRPPWRRPPSLVPRLCKGAWCGASKAAAALRHAEMNTR.

Positions 1437–1528 (VAEYEAETRG…GREKDQLRSE (92 aa)) form a coiled coil.

It is found in the cytoplasm. It localises to the cytoskeleton. The protein resides in the microtubule organizing center. The protein localises to the centrosome. In terms of biological role, required for proper nuclei segregation during the cell division. Plays a role in coordination of karyokinesis and cytokinesis during the tachyzoite cell cycle. The polypeptide is Centrosome-associated protein CEP530 (Toxoplasma gondii (strain ATCC 50611 / Me49)).